A 167-amino-acid chain; its full sequence is Epithelial membrane protein 2 (167 aa).

A helical transmembrane segment spans residues 1–21 (MLVLLAFIIAFHITSAALLFI). N-linked (GlcNAc...) asparagine glycans are attached at residues asparagine 44, asparagine 47, and asparagine 52. The next 3 helical transmembrane spans lie at 67 to 87 (TMIL…LQLF), 95 to 115 (FVLT…AASI), and 143 to 163 (YILA…YLIL).

The protein belongs to the PMP-22/EMP/MP20 family. In terms of assembly, interacts with PTK2; regulates PTK2 activation and localization. Interacts with ITGB3; regulates the levels of the heterodimer ITGA5-ITGB3 integrin surface expression. Interacts with P2RX7 (via C-terminus). Interacts with ITGB1; the interaction may be direct or indirect and ITGB1 has a heterodimer form. Expressed in ciliary body epithelia, sclera, cornea, and retinal pigment epithelium (at protein level). Expressed in lung and endometrial tissue; expression is particularly abundant in secretory endometrium (at protein level). Expressed in placental villous syncytiotrophoblasts and cytotrophoblasts and on the membrane of interstitial trophoblasts (at protein level).

Its subcellular location is the golgi apparatus membrane. The protein localises to the cell membrane. It is found in the apical cell membrane. The protein resides in the membrane raft. It localises to the cytoplasm. Its subcellular location is the nucleus. The protein localises to the perinuclear region. Its function is as follows. Functions as a key regulator of cell membrane composition by regulating protein surface expression. Also, plays a role in regulation of processes including cell migration, cell proliferation, cell contraction and cell adhesion. Regulates transepithelial migration of neutrophils into the alveolar lumen, potentially via mediation of cell surface expression of adhesion markers and lipid raft formation. Negatively regulates caveolae formation by reducing CAV1 expression and CAV1 amount by increasing lysosomal degradation. Facilitates surface trafficking and formation of lipid rafts bearing GPI-anchor proteins. Regulates surface expression of MHC1 and ICAM1 proteins increasing susceptibility to T-cell mediated cytotoxicity. Regulates the plasma membrane expression of the integrin heterodimers ITGA6-ITGB1, ITGA5-ITGB3 and ITGA5-ITGB1 resulting in modulation of cell-matrix adhesion. Also regulates many processes through PTK2. Regulates blood vessel endothelial cell migration and angiogenesis by regulating VEGF protein expression through PTK2 activation. Regulates cell migration and cell contraction through PTK2 and SRC activation. Regulates focal adhesion density, F-actin conformation and cell adhesion capacity through interaction with PTK2. Positively regulates cell proliferation. Plays a role during cell death and cell blebbing. Promotes angiogenesis and vasculogenesis through induction of VEGFA via a HIF1A-dependent pathway. Also plays a role in embryo implantation by regulating surface trafficking of integrin heterodimer ITGA5-ITGB3. Plays a role in placental angiogenesis and uterine natural killer cell regulation at the maternal-fetal placental interface, however not required in the maternal tissues for a viable pregnancy. Involved in the early stages of embryogenic development and cardiogenesis, potentially via regulation of epithelial-mesenchymal transition timing. May play a role in glomerular filtration. This Homo sapiens (Human) protein is Epithelial membrane protein 2 (EMP2).